The primary structure comprises 332 residues: Leucine carboxyl methyltransferase 1 homolog (332 aa).

Residues K22, R57, G83, D107, 153–154 (DL), and E180 each bind S-adenosyl-L-methionine.

It belongs to the methyltransferase superfamily. LCMT family.

The protein localises to the cytoplasm. Its subcellular location is the membrane. It catalyses the reaction [phosphatase 2A protein]-C-terminal L-leucine + S-adenosyl-L-methionine = [phosphatase 2A protein]-C-terminal L-leucine methyl ester + S-adenosyl-L-homocysteine. Functionally, methylates the carboxyl group of the C-terminal leucine residue of protein phosphatase 2A (PP2A) catalytic subunits to form alpha-leucine ester residues. Involved in brassinosteroid (BR) signaling. Plays a negative role in BR signaling pathway. Functions as a positive regulator of BRI1 receptor-kinase degradation. Methylates PP2A, thus facilitating its association with activated BRI1. This leads to receptor dephosphorylation and degradation, and thus to the termination of BR signaling. May act upstream of ASK7/BIN2. Involved in methylation of PP2A during environmental stress responses. This Arabidopsis thaliana (Mouse-ear cress) protein is Leucine carboxyl methyltransferase 1 homolog.